The chain runs to 309 residues: Acetyl-coenzyme A carboxylase carboxyl transferase subunit beta (309 aa).

The CoA carboxyltransferase N-terminal domain occupies 29-298 (NSDWTSCCKG…AINSSENETS (270 aa)). 4 residues coordinate Zn(2+): Cys-35, Cys-36, Cys-52, and Cys-55.

Belongs to the AccD/PCCB family. As to quaternary structure, acetyl-CoA carboxylase is a heterohexamer composed of biotin carboxyl carrier protein (AccB), biotin carboxylase (AccC) and two subunits each of ACCase subunit alpha (AccA) and ACCase subunit beta (AccD). Requires Zn(2+) as cofactor.

It localises to the cytoplasm. It catalyses the reaction N(6)-carboxybiotinyl-L-lysyl-[protein] + acetyl-CoA = N(6)-biotinyl-L-lysyl-[protein] + malonyl-CoA. It participates in lipid metabolism; malonyl-CoA biosynthesis; malonyl-CoA from acetyl-CoA: step 1/1. Functionally, component of the acetyl coenzyme A carboxylase (ACC) complex. Biotin carboxylase (BC) catalyzes the carboxylation of biotin on its carrier protein (BCCP) and then the CO(2) group is transferred by the transcarboxylase to acetyl-CoA to form malonyl-CoA. The sequence is that of Acetyl-coenzyme A carboxylase carboxyl transferase subunit beta from Pelagibacter ubique (strain HTCC1062).